Here is a 351-residue protein sequence, read N- to C-terminus: Alanine racemase (351 aa).

Lys34 acts as the Proton acceptor; specific for D-alanine in catalysis. An N6-(pyridoxal phosphate)lysine modification is found at Lys34. Arg126 is a substrate binding site. Tyr248 (proton acceptor; specific for L-alanine) is an active-site residue. Met296 is a binding site for substrate.

The protein belongs to the alanine racemase family. Pyridoxal 5'-phosphate serves as cofactor.

The enzyme catalyses L-alanine = D-alanine. Its pathway is amino-acid biosynthesis; D-alanine biosynthesis; D-alanine from L-alanine: step 1/1. Its function is as follows. Catalyzes the interconversion of L-alanine and D-alanine. May also act on other amino acids. In Deinococcus radiodurans (strain ATCC 13939 / DSM 20539 / JCM 16871 / CCUG 27074 / LMG 4051 / NBRC 15346 / NCIMB 9279 / VKM B-1422 / R1), this protein is Alanine racemase (alr).